The following is a 203-amino-acid chain: Holliday junction branch migration complex subunit RuvA (203 aa).

The segment at 1–64 is domain I; that stretch reads MIGRLRGIIL…EDAQLLYGFN (64 aa). The segment at 65 to 142 is domain II; it reads NKQERMLFRE…KGLHGDLFTP (78 aa). The tract at residues 143–154 is flexible linker; sequence AADLVLTSPNGP. The interval 155 to 203 is domain III; sequence TSDDAEQEAVAALVALGYKPQEASRMVSKIAKPDANSETLIREALRAAL.

This sequence belongs to the RuvA family. In terms of assembly, homotetramer. Forms an RuvA(8)-RuvB(12)-Holliday junction (HJ) complex. HJ DNA is sandwiched between 2 RuvA tetramers; dsDNA enters through RuvA and exits via RuvB. An RuvB hexamer assembles on each DNA strand where it exits the tetramer. Each RuvB hexamer is contacted by two RuvA subunits (via domain III) on 2 adjacent RuvB subunits; this complex drives branch migration. In the full resolvosome a probable DNA-RuvA(4)-RuvB(12)-RuvC(2) complex forms which resolves the HJ.

The protein resides in the cytoplasm. Its function is as follows. The RuvA-RuvB-RuvC complex processes Holliday junction (HJ) DNA during genetic recombination and DNA repair, while the RuvA-RuvB complex plays an important role in the rescue of blocked DNA replication forks via replication fork reversal (RFR). RuvA specifically binds to HJ cruciform DNA, conferring on it an open structure. The RuvB hexamer acts as an ATP-dependent pump, pulling dsDNA into and through the RuvAB complex. HJ branch migration allows RuvC to scan DNA until it finds its consensus sequence, where it cleaves and resolves the cruciform DNA. This Enterobacter sp. (strain 638) protein is Holliday junction branch migration complex subunit RuvA.